A 160-amino-acid chain; its full sequence is Anaerobic nitrite reductase MHB1 (160 aa).

The Globin domain occupies 8-157; sequence GFTEEQEALV…LVNAIKSEMK (150 aa). The short motif at 41–45 is the Homodimerization element; the sequence is EIAPS. Residues serine 51, lysine 65, histidine 69, lysine 99, and histidine 104 each coordinate heme b. A Homodimerization motif is present at residues 111–123; it reads DEHFEVTKFALLE.

Belongs to the plant globin family. As to quaternary structure, homodimer. It depends on heme b as a cofactor. As to expression, root specific.

The protein localises to the nucleus matrix. It is found in the cytoplasm. The enzyme catalyses Fe(III)-heme b-[protein] + nitric oxide + H2O = Fe(II)-heme b-[protein] + nitrite + 2 H(+). Its function is as follows. Phytoglobin that reduces nitrite to nitric oxide (NO) under anoxic conditions (e.g. during flooding or in waterlogged soil) and upon root nodulation. Required for general plant development and during nodulation, especially for the onset of symbiosis. Monitors nitric oxide (NO) levels during early phase of the nitrogen-fixing symbiosis and buffers oxygen in functioning nodules. May not function as an oxygen storage or transport protein. Has an unusually high affinity for O(2) through a hexacoordinate heme iron because of a very low dissociation constant. This chain is Anaerobic nitrite reductase MHB1, found in Medicago sativa (Alfalfa).